Reading from the N-terminus, the 374-residue chain is Homoserine O-succinyltransferase (374 aa).

Residues 47-357 (NAILVCHALS…NFGHDSFLME (311 aa)) form the AB hydrolase-1 domain. The Nucleophile role is filled by Ser-153. A substrate-binding site is contributed by Arg-223. Residues Asp-318 and His-351 contribute to the active site. Position 352 (Asp-352) interacts with substrate.

Belongs to the AB hydrolase superfamily. MetX family. As to quaternary structure, homodimer.

Its subcellular location is the cytoplasm. It catalyses the reaction L-homoserine + succinyl-CoA = O-succinyl-L-homoserine + CoA. It functions in the pathway amino-acid biosynthesis; L-methionine biosynthesis via de novo pathway; O-succinyl-L-homoserine from L-homoserine: step 1/1. Its function is as follows. Transfers a succinyl group from succinyl-CoA to L-homoserine, forming succinyl-L-homoserine. This Dechloromonas aromatica (strain RCB) protein is Homoserine O-succinyltransferase.